A 666-amino-acid chain; its full sequence is Galactocerebrosidase (666 aa).

The first 22 residues, 1-22, serve as a signal peptide directing secretion; sequence MIYKLYFAIALCFSLCFDLCIA. Thr91 provides a ligand contact to substrate. Asn125 is a glycosylation site (N-linked (GlcNAc...) asparagine). Trp133 and Asn179 together coordinate substrate. Catalysis depends on Glu180, which acts as the Proton donor/acceptor. The active-site Nucleophile is Glu256. Residues Cys269 and Cys376 are joined by a disulfide bond. Asn361 carries an N-linked (GlcNAc...) asparagine glycan. Arg378 contributes to the substrate binding site. Asn385, Asn390, Asn500, and Asn540 each carry an N-linked (GlcNAc...) asparagine glycan.

The protein belongs to the glycosyl hydrolase 59 family.

Its subcellular location is the lysosome. The catalysed reaction is a beta-D-galactosyl-(1&lt;-&gt;1')-N-acylsphing-4-enine + H2O = an N-acylsphing-4-enine + D-galactose. It catalyses the reaction beta-D-galactosyl-(1&lt;-&gt;1)-sphing-4-enine + H2O = sphing-4-enine + D-galactose. It carries out the reaction a D-galactosylceramide + H2O = an N-acyl-sphingoid base + D-galactose. Hydrolyzes the galactose ester bonds of glycolipids such as galactosylceramide and galactosylsphingosine. The chain is Galactocerebrosidase from Salmo salar (Atlantic salmon).